The primary structure comprises 160 residues: NADH-quinone oxidoreductase subunit I (160 aa).

2 4Fe-4S ferredoxin-type domains span residues 51–81 and 91–120; these read LRRY…IEAA and VRYD…EGPN. Cysteine 61, cysteine 64, cysteine 67, cysteine 71, cysteine 100, cysteine 103, cysteine 106, and cysteine 110 together coordinate [4Fe-4S] cluster.

The protein belongs to the complex I 23 kDa subunit family. In terms of assembly, NDH-1 is composed of 14 different subunits. Subunits NuoA, H, J, K, L, M, N constitute the membrane sector of the complex. Requires [4Fe-4S] cluster as cofactor.

The protein localises to the cell inner membrane. The catalysed reaction is a quinone + NADH + 5 H(+)(in) = a quinol + NAD(+) + 4 H(+)(out). Its function is as follows. NDH-1 shuttles electrons from NADH, via FMN and iron-sulfur (Fe-S) centers, to quinones in the respiratory chain. The immediate electron acceptor for the enzyme in this species is believed to be ubiquinone. Couples the redox reaction to proton translocation (for every two electrons transferred, four hydrogen ions are translocated across the cytoplasmic membrane), and thus conserves the redox energy in a proton gradient. This Anaplasma marginale (strain St. Maries) protein is NADH-quinone oxidoreductase subunit I.